The sequence spans 332 residues: MNLLNLPKIELHCHLDGSLRVETAIELAKKEGIKLHSYEYDKVKELLVISKECNSLEDYLNRFALPAKLLQRPENLERVAFELMEDASKENVKYIEIRFAPLLHLEKGMTQKEVIESVIKGIRKAEEFYDIKGNLILSCLRHHSIDSVYEVIEEGKNFIGKGVVAIDLAGGELEGFVKPYKEVMKLARESGFRVTIHAGETGYGKNVRDAIELLGAERIGHGLFIFNDEEAYNLVKEKGVTLEMCPKSNIDTKGVNKYEEHPIYKYHKDNIRVNLSTDNRTVSNINLTEEFENVHKTFNIDFEDYKKIYLNSVEASFCSEELKEKLKLSIII.

Residues His-12 and His-14 each coordinate Zn(2+). His-14, Asp-16, and Gly-170 together coordinate substrate. Residue His-197 participates in Zn(2+) binding. Glu-200 serves as the catalytic Proton donor. Asp-278 contributes to the Zn(2+) binding site.

The protein belongs to the metallo-dependent hydrolases superfamily. Adenosine and AMP deaminases family. Adenosine deaminase subfamily. It depends on Zn(2+) as a cofactor.

The catalysed reaction is adenosine + H2O + H(+) = inosine + NH4(+). It carries out the reaction 2'-deoxyadenosine + H2O + H(+) = 2'-deoxyinosine + NH4(+). Its function is as follows. Catalyzes the hydrolytic deamination of adenosine and 2-deoxyadenosine. This chain is Adenosine deaminase, found in Clostridium perfringens (strain SM101 / Type A).